The primary structure comprises 460 residues: Putative type II methyltransferase M.OihORF3336P (460 aa).

Residues 15 to 458 (PEVVDLFSGC…EAMKKNIQGG (444 aa)) form the SAM-dependent MTase C5-type domain. Residue cysteine 97 is part of the active site.

Belongs to the class I-like SAM-binding methyltransferase superfamily. C5-methyltransferase family.

It catalyses the reaction a 2'-deoxycytidine in DNA + S-adenosyl-L-methionine = a 5-methyl-2'-deoxycytidine in DNA + S-adenosyl-L-homocysteine + H(+). Functionally, a methylase, recognizes the double-stranded sequence 5'-ACCGGT-3', methylates C-? on both strands. No endonuclease has been identified for this methylase. This is Putative type II methyltransferase M.OihORF3336P from Oceanobacillus iheyensis (strain DSM 14371 / CIP 107618 / JCM 11309 / KCTC 3954 / HTE831).